Consider the following 461-residue polypeptide: Protein FAM124B (461 aa).

Serine 49 is subject to Phosphoserine. The segment at 302–346 is disordered; that stretch reads VELPEPGGRPVSDGSSNTWWKSAGGSAQPSSPATESQPQLSSLHL. A compositionally biased stretch (low complexity) spans 323-334; that stretch reads SAGGSAQPSSPA.

This sequence belongs to the FAM124 family. In terms of assembly, interacts with CHD7 and CHD8.

The protein localises to the nucleus. This chain is Protein FAM124B (FAM124B), found in Bos taurus (Bovine).